We begin with the raw amino-acid sequence, 506 residues long: H/ACA ribonucleoprotein complex subunit DKC1 (506 aa).

Residues 1–26 (MADTESKKEKKRKSKKISDEEVGDIQ) form a disordered region. Catalysis depends on Asp-120, which acts as the Nucleophile. In terms of domain architecture, PUA spans 291–366 (HKRIVMKDSA…VVAKIKRVIM (76 aa)). Disordered regions lie at residues 391–410 (GLLD…WKEG) and 419–506 (VKKG…ADSD). The span at 421–434 (KGGEASAKRKRDES) shows a compositional bias: basic and acidic residues. Positions 457–466 (EKKKKKKEKK) are enriched in basic residues.

This sequence belongs to the pseudouridine synthase TruB family. Part of the H/ACA small nucleolar ribonucleoprotein (H/ACA snoRNP) complex. The complex binds a box H/ACA small nucleolar RNA (snoRNA), which may target the specific site of modification within the RNA substrate.

It localises to the nucleus. It is found in the nucleolus. The protein localises to the cajal body. The enzyme catalyses uridine in 5S rRNA = pseudouridine in 5S rRNA. Catalytic subunit of H/ACA small nucleolar ribonucleoprotein (H/ACA snoRNP) complex, which catalyzes pseudouridylation of rRNA. This involves the isomerization of uridine such that the ribose is subsequently attached to C5, instead of the normal N1. Pseudouridine ('psi') residues may serve to stabilize the conformation of rRNAs. Required for ribosome biogenesis and telomere maintenance. This is H/ACA ribonucleoprotein complex subunit DKC1 from Danio rerio (Zebrafish).